A 426-amino-acid chain; its full sequence is COP9 signalosome complex subunit 6 (426 aa).

An MPN domain is found at 14-155; it reads VLLHPLVIMQ…AGTTRKLPLF (142 aa). Positions 320 to 426 are disordered; sequence PVRFKSQHLG…NESDESSQAS (107 aa). Residues 334-347 show a composition bias toward acidic residues; that stretch reads ADDDDYFDDEDLEN.

It belongs to the peptidase M67A family. CSN6 subfamily. Component of the CSN complex, probably composed of csn-1, csn-2, csn-3, csn-4, csn-5, csn-6 and csn-7. Within the complex it probably interacts directly with csn-2 and csn-4. Interacts with rbx-1.

Its subcellular location is the cytoplasm. The protein localises to the nucleus. Functionally, component of the COP9 signalosome complex (CSN), a complex involved in various cellular and developmental processes. The CSN complex is an essential regulator of the ubiquitin (Ubl) conjugation pathway by mediating the deneddylation of the cullin subunits of the SCF-type E3 ligase complexes, leading to decrease the Ubl ligase activity of SCF. The CSN complex plays an essential role in embryogenesis and oogenesis and is required to regulate microtubule stability in the early embryo. Mediates mei-3/katanin targeting for degradation at the meiosis to mitosis transition via deneddylation of cul-3. The sequence is that of COP9 signalosome complex subunit 6 (csn-6) from Caenorhabditis elegans.